The following is a 156-amino-acid chain: uncharacterized protein (156 aa).

It to L.lactis TrpF C-terminal region.

This is an uncharacterized protein from Bacillus subtilis (strain 168).